The following is a 44-amino-acid chain: Photosystem I reaction center subunit IX (44 aa).

A helical membrane pass occupies residues 7–27; that stretch reads YLSTAPVLTTLWFGSLAGLLI.

This sequence belongs to the PsaJ family.

It is found in the plastid. The protein localises to the chloroplast thylakoid membrane. Functionally, may help in the organization of the PsaE and PsaF subunits. The chain is Photosystem I reaction center subunit IX from Phalaenopsis aphrodite subsp. formosana (Moth orchid).